Here is a 116-residue protein sequence, read N- to C-terminus: MMEIMLKAKIHMATVTEKEIEYEGSIGIDEELLELSGIKINEMVLISDVNNGNRFITYVIPEPRGSRKISLNGAAARLVEKGDKIIIMAFGLYSKDEYKSPKILIMNSDNTVKEIR.

Serine 25 serves as the catalytic Schiff-base intermediate with substrate; via pyruvic acid. Position 25 is a pyruvic acid (Ser) (serine 25). Threonine 57 contacts substrate. Tyrosine 58 serves as the catalytic Proton donor. Residue 73–75 participates in substrate binding; the sequence is GAA.

It belongs to the PanD family. Heterooctamer of four alpha and four beta subunits. Pyruvate is required as a cofactor. In terms of processing, is synthesized initially as an inactive proenzyme, which is activated by self-cleavage at a specific serine bond to produce a beta-subunit with a hydroxyl group at its C-terminus and an alpha-subunit with a pyruvoyl group at its N-terminus.

It localises to the cytoplasm. It catalyses the reaction L-aspartate + H(+) = beta-alanine + CO2. It functions in the pathway cofactor biosynthesis; (R)-pantothenate biosynthesis; beta-alanine from L-aspartate: step 1/1. In terms of biological role, catalyzes the pyruvoyl-dependent decarboxylation of aspartate to produce beta-alanine. The polypeptide is Aspartate 1-decarboxylase (Fervidobacterium nodosum (strain ATCC 35602 / DSM 5306 / Rt17-B1)).